The sequence spans 264 residues: Indole-3-glycerol phosphate synthase (264 aa).

This sequence belongs to the TrpC family.

It catalyses the reaction 1-(2-carboxyphenylamino)-1-deoxy-D-ribulose 5-phosphate + H(+) = (1S,2R)-1-C-(indol-3-yl)glycerol 3-phosphate + CO2 + H2O. The protein operates within amino-acid biosynthesis; L-tryptophan biosynthesis; L-tryptophan from chorismate: step 4/5. This Carboxydothermus hydrogenoformans (strain ATCC BAA-161 / DSM 6008 / Z-2901) protein is Indole-3-glycerol phosphate synthase.